Consider the following 513-residue polypeptide: Putative thymidine phosphorylase (513 aa).

This sequence belongs to the thymidine/pyrimidine-nucleoside phosphorylase family. Type 2 subfamily.

The enzyme catalyses thymidine + phosphate = 2-deoxy-alpha-D-ribose 1-phosphate + thymine. This is Putative thymidine phosphorylase from Rhodopseudomonas palustris (strain BisB18).